A 660-amino-acid polypeptide reads, in one-letter code: UvrABC system protein B (660 aa).

The region spanning 27–414 (NGVNEGKRHQ…TDEMVQQIIR (388 aa)) is the Helicase ATP-binding domain. 40–47 (GATGTGKT) serves as a coordination point for ATP. Residues 93-116 (YYDYYQPEAYVPSTDTFIEKDASI) carry the Beta-hairpin motif. The Helicase C-terminal domain occupies 431–593 (QIDDLLGEIQ…ITPTTINKKI (163 aa)). Positions 603 to 622 (NDETNEQQQTEVPKKMTKKE) are disordered. A UVR domain is found at 624-659 (EKTIANIEKEMKQAAKDLDFEKATELRDMLFELKAE).

It belongs to the UvrB family. As to quaternary structure, forms a heterotetramer with UvrA during the search for lesions. Interacts with UvrC in an incision complex.

It localises to the cytoplasm. In terms of biological role, the UvrABC repair system catalyzes the recognition and processing of DNA lesions. A damage recognition complex composed of 2 UvrA and 2 UvrB subunits scans DNA for abnormalities. Upon binding of the UvrA(2)B(2) complex to a putative damaged site, the DNA wraps around one UvrB monomer. DNA wrap is dependent on ATP binding by UvrB and probably causes local melting of the DNA helix, facilitating insertion of UvrB beta-hairpin between the DNA strands. Then UvrB probes one DNA strand for the presence of a lesion. If a lesion is found the UvrA subunits dissociate and the UvrB-DNA preincision complex is formed. This complex is subsequently bound by UvrC and the second UvrB is released. If no lesion is found, the DNA wraps around the other UvrB subunit that will check the other stand for damage. The sequence is that of UvrABC system protein B from Staphylococcus saprophyticus subsp. saprophyticus (strain ATCC 15305 / DSM 20229 / NCIMB 8711 / NCTC 7292 / S-41).